The following is a 370-amino-acid chain: Protein Brevis radix-like 3 (370 aa).

The region spanning 140-221 (KEWVAQVEPG…NFEKVMELYN (82 aa)) is the BRX 1 domain. Polar residues-rich tracts occupy residues 231 to 248 (LQTP…QSVK) and 266 to 291 (PGSS…SSID). The interval 231–316 (LQTPPVSEDG…VSNASDMESE (86 aa)) is disordered. In terms of domain architecture, BRX 2 spans 315–370 (SEWVEQDEPGIYITIRALPDGNRELRRVRFSRDKFGETHARLWWEQNRARIQQQYL).

The protein belongs to the BRX family. Expressed in roots.

It is found in the nucleus. The sequence is that of Protein Brevis radix-like 3 (BRXL3) from Arabidopsis thaliana (Mouse-ear cress).